Reading from the N-terminus, the 199-residue chain is Probable GTP-binding protein EngB (199 aa).

The 172-residue stretch at 28-199 (DLPEIALAGR…DSWDAILEQV (172 aa)) folds into the EngB-type G domain. GTP contacts are provided by residues 36-43 (GRSNVGKS), 63-67 (GKTQL), 81-84 (DVPG), 148-151 (TKAD), and 180-182 (FSS). Residues S43 and T65 each coordinate Mg(2+).

It belongs to the TRAFAC class TrmE-Era-EngA-EngB-Septin-like GTPase superfamily. EngB GTPase family. Mg(2+) is required as a cofactor.

In terms of biological role, necessary for normal cell division and for the maintenance of normal septation. This chain is Probable GTP-binding protein EngB, found in Streptococcus pyogenes serotype M3 (strain SSI-1).